We begin with the raw amino-acid sequence, 551 residues long: Alkaline/neutral invertase CINV1 (551 aa).

Position 1 is an N-acetylmethionine (M1). Phosphoserine is present on residues S11, S14, S44, and S61. The tract at residues 50 to 74 (TGYSRHDGIHDSPRGRSVLDTPLSS) is disordered. A compositionally biased stretch (basic and acidic residues) spans 53 to 63 (SRHDGIHDSPR). Position 70 is a phosphothreonine (T70). The residue at position 547 (S547) is a Phosphoserine.

The protein belongs to the glycosyl hydrolase 100 family. Forms homohexamers. Interacts with PIP5K9. Interaction with PIP5K9 represses CINV1 activity. Interacts with GRF1, GRF2, GRF3, GRF4, GRF5, GRF6, GRF7, GRF8 and GRF10; these interactions are dependent of the phosphorylation at Ser-547. Phosphorylated at Ser-547 by CPK3 and CPK21. Expressed in radicle, hypocotyls, root tips and vascular cylinder, leaf vasculature, shoot stipules, trichomes, stem, stigma apex and base of siliques.

It localises to the cytoplasm. The protein resides in the cytosol. The protein localises to the nucleus. It catalyses the reaction Hydrolysis of terminal non-reducing beta-D-fructofuranoside residues in beta-D-fructofuranosides.. In terms of biological role, cytosolic invertase that specifically cleaves sucrose into glucose and fructose and is involved in the regulation of multiple tissue development including primary root elongation, root hair growth, leaf and silique development, and floral transition. Is involved in osmotic stress-induced inhibition on lateral root growth by controlling the concentration of hexose in cells. May regulate sugar-mediated root development by controlling sucrose catabolism in root cells. Contributes to carbon partitioning and cellulose biosynthesis in seedlings. This chain is Alkaline/neutral invertase CINV1, found in Arabidopsis thaliana (Mouse-ear cress).